Here is a 433-residue protein sequence, read N- to C-terminus: MRDKISESTQKIFHAVWERIAPFHEMIQSRPAVLSYSGGKDSSILLHFYFWLWIEKKIPAPCIYHLDHSIRFNLEQEKKIFEYADSTFPFSKIFKKKNIPALSRRLGKTLEETGRAFRYKDLKKISDQYEGYIVTGHHSSDYLETILLNLIRGGGWNSLRTLGWYEKNRFRPLFAFSQDEIETILQSEFWKIFEDESNNSDEYLRNRIRSYIIPLLLREGANPDRIYKNFHRIEKPVSKIFSKKNSDHKIPSFLKIDIWVLNDLSQRERKFFIDRYLRSLNLYPTTRNFFRDLTDLLQKENSFSLENKETWFWKSTSSDLYLIPKNSPCLREFRFEPKEMVLKWNGNQKKIPPDLIPDLCPAGAKIRKNGMSIEISEILRQKEIPVPVRKMLPILRGERKVDVICLSLWDPKIGDIVADREVEILPDFQEPGV.

Residue 37–42 (SGGKDS) coordinates ATP.

The protein belongs to the tRNA(Ile)-lysidine synthase family.

The protein resides in the cytoplasm. It catalyses the reaction cytidine(34) in tRNA(Ile2) + L-lysine + ATP = lysidine(34) in tRNA(Ile2) + AMP + diphosphate + H(+). Functionally, ligates lysine onto the cytidine present at position 34 of the AUA codon-specific tRNA(Ile) that contains the anticodon CAU, in an ATP-dependent manner. Cytidine is converted to lysidine, thus changing the amino acid specificity of the tRNA from methionine to isoleucine. The sequence is that of tRNA(Ile)-lysidine synthase from Leptospira interrogans serogroup Icterohaemorrhagiae serovar Lai (strain 56601).